The sequence spans 172 residues: Lipoprotein signal peptidase (172 aa).

The next 2 helical transmembrane spans lie at 70–90 (ERWL…AWIW) and 94–114 (AKGD…NIAD). Catalysis depends on residues Asp123 and Asp142. A helical membrane pass occupies residues 134–154 (PFLVFNVADAAITIGVLILVL).

It belongs to the peptidase A8 family.

The protein localises to the cell inner membrane. It catalyses the reaction Release of signal peptides from bacterial membrane prolipoproteins. Hydrolyzes -Xaa-Yaa-Zaa-|-(S,diacylglyceryl)Cys-, in which Xaa is hydrophobic (preferably Leu), and Yaa (Ala or Ser) and Zaa (Gly or Ala) have small, neutral side chains.. Its pathway is protein modification; lipoprotein biosynthesis (signal peptide cleavage). Functionally, this protein specifically catalyzes the removal of signal peptides from prolipoproteins. The chain is Lipoprotein signal peptidase from Rhizorhabdus wittichii (strain DSM 6014 / CCUG 31198 / JCM 15750 / NBRC 105917 / EY 4224 / RW1) (Sphingomonas wittichii).